The following is a 301-amino-acid chain: D-alanine--D-alanine ligase (301 aa).

The region spanning K99–E293 is the ATP-grasp domain. I126–T181 contacts ATP. Mg(2+) is bound by residues D248, E260, and N262.

The protein belongs to the D-alanine--D-alanine ligase family. Mg(2+) serves as cofactor. The cofactor is Mn(2+).

It localises to the cytoplasm. The catalysed reaction is 2 D-alanine + ATP = D-alanyl-D-alanine + ADP + phosphate + H(+). Its pathway is cell wall biogenesis; peptidoglycan biosynthesis. Functionally, cell wall formation. The sequence is that of D-alanine--D-alanine ligase from Clostridium perfringens (strain SM101 / Type A).